Reading from the N-terminus, the 267-residue chain is Orotidine 5'-phosphate decarboxylase (267 aa).

Ser-2 is subject to N-acetylserine. Residues Asp-37, 59–61, and 91–100 contribute to the substrate site; these read KTH and DRKFADIGNT. Catalysis depends on Lys-93, which acts as the Proton donor. Glycyl lysine isopeptide (Lys-Gly) (interchain with G-Cter in ubiquitin) cross-links involve residues Lys-93 and Lys-209. Substrate-binding residues include Tyr-217 and Arg-235. Lys-253 is covalently cross-linked (Glycyl lysine isopeptide (Lys-Gly) (interchain with G-Cter in ubiquitin)).

The protein belongs to the OMP decarboxylase family.

The catalysed reaction is orotidine 5'-phosphate + H(+) = UMP + CO2. It participates in pyrimidine metabolism; UMP biosynthesis via de novo pathway; UMP from orotate: step 2/2. In Saccharomyces cerevisiae (strain ATCC 204508 / S288c) (Baker's yeast), this protein is Orotidine 5'-phosphate decarboxylase (URA3).